Here is a 325-residue protein sequence, read N- to C-terminus: Beta-ketoacyl-[acyl-carrier-protein] synthase III (325 aa).

Catalysis depends on residues Cys-119 and His-252. Positions 253–257 (QANIR) are ACP-binding. Asn-282 is an active-site residue.

This sequence belongs to the thiolase-like superfamily. FabH family. Homodimer.

It is found in the cytoplasm. The enzyme catalyses malonyl-[ACP] + acetyl-CoA + H(+) = 3-oxobutanoyl-[ACP] + CO2 + CoA. The protein operates within lipid metabolism; fatty acid biosynthesis. Functionally, catalyzes the condensation reaction of fatty acid synthesis by the addition to an acyl acceptor of two carbons from malonyl-ACP. Catalyzes the first condensation reaction which initiates fatty acid synthesis and may therefore play a role in governing the total rate of fatty acid production. Possesses both acetoacetyl-ACP synthase and acetyl transacylase activities. Its substrate specificity determines the biosynthesis of branched-chain and/or straight-chain of fatty acids. The polypeptide is Beta-ketoacyl-[acyl-carrier-protein] synthase III (Polaromonas sp. (strain JS666 / ATCC BAA-500)).